A 496-amino-acid chain; its full sequence is Serine/threonine-protein kinase Sgk3 (496 aa).

Positions 12–124 (SCPSVSIPSS…AFLQMDSPRH (113 aa)) constitute a PX domain. The segment at 121-157 (SPRHQSDPSEDEDERSTPKPHSTSRNINLGPTGNPHA) is disordered. S126 and S129 each carry phosphoserine. Over residues 139–151 (KPHSTSRNINLGP) the composition is skewed to polar residues. One can recognise a Protein kinase domain in the interval 162 to 464 (FDFLKVIGKG…EETVPYSVCV (303 aa)). ATP contacts are provided by residues 168-176 (IGKGSFGKV) and K191. The Nuclear localization signal signature appears at 195–205 (KKIVLNRKEQK). Residue D286 is the Proton acceptor of the active site. T320 carries the post-translational modification Phosphothreonine; by PDPK1. One can recognise an AGC-kinase C-terminal domain in the interval 420-496 (ESLSWTDLVQ…YAPPSEDLFL (77 aa)). A Phosphoserine modification is found at S486.

This sequence belongs to the protein kinase superfamily. AGC Ser/Thr protein kinase family. Interacts with GSK3B and FLII. Interacts with PDPK1 in a phosphorylation-dependent manner. Post-translationally, activated by phosphorylation on Ser-486 by an unknown kinase (may be mTORC2 but not confirmed), transforming it into a substrate for PDPK1 which then phosphorylates it on Thr-320.

It localises to the cytoplasmic vesicle. It is found in the early endosome. Its subcellular location is the recycling endosome. It catalyses the reaction L-seryl-[protein] + ATP = O-phospho-L-seryl-[protein] + ADP + H(+). The catalysed reaction is L-threonyl-[protein] + ATP = O-phospho-L-threonyl-[protein] + ADP + H(+). With respect to regulation, two specific sites, one in the kinase domain (Thr-320) and the other in the C-terminal regulatory region (Ser-486), need to be phosphorylated for its full activation. Functionally, serine/threonine-protein kinase which is involved in the regulation of a wide variety of ion channels, membrane transporters, cell growth, proliferation, survival and migration. Up-regulates Na(+) channels: SCNN1A/ENAC and SCN5A, K(+) channels: KCNA3/KV1.3, KCNE1, KCNQ1 and KCNH2/HERG, epithelial Ca(2+) channels: TRPV5 and TRPV6, chloride channel: BSND, creatine transporter: SLC6A8, Na(+)/dicarboxylate cotransporter: SLC13A2/NADC1, Na(+)-dependent phosphate cotransporter: SLC34A2/NAPI-2B, amino acid transporters: SLC1A5/ASCT2 and SLC6A19, glutamate transporters: SLC1A3/EAAT1, SLC1A6/EAAT4 and SLC1A7/EAAT5, glutamate receptors: GRIA1/GLUR1 and GRIK2/GLUR6, Na(+)/H(+) exchanger: SLC9A3/NHE3, and the Na(+)/K(+) ATPase. Plays a role in the regulation of renal tubular phosphate transport and bone density. Phosphorylates NEDD4L and GSK3B. Positively regulates ER transcription activity through phosphorylation of FLII. Negatively regulates the function of ITCH/AIP4 via its phosphorylation and thereby prevents CXCR4 from being efficiently sorted to lysosomes. The polypeptide is Serine/threonine-protein kinase Sgk3 (Sgk3) (Rattus norvegicus (Rat)).